Reading from the N-terminus, the 201-residue chain is DeSI-like protein sdu1 (201 aa).

One can recognise a PPPDE domain in the interval 1 to 143; sequence MKVYINVYDL…AFPTITNALL (143 aa). Residues H29 and C105 contribute to the active site. The disordered stretch occupies residues 146–201; sequence GQKNTSDVDDSSDSSSDVDEETLIVSKSKKAHKDIPKFSAPPPSADLNNLITDSLP. Residues 152–167 show a composition bias toward acidic residues; it reads DVDDSSDSSSDVDEET. Polar residues predominate over residues 191–201; the sequence is DLNNLITDSLP.

Belongs to the DeSI family.

Its subcellular location is the cytoplasm. Has a role in meiosis. This chain is DeSI-like protein sdu1 (sdu1), found in Schizosaccharomyces pombe (strain 972 / ATCC 24843) (Fission yeast).